Here is a 1117-residue protein sequence, read N- to C-terminus: MQMAEAEQENGAGALKIATNAGATDRPAHQQLPLPVEDQQDEVLTPAEKGKFEYPPPPPPPTPVQAPLATKATALNASQEHDDDEANSEKWEDPCAPPPPPPLPTSAFLATGLGYLKLPAFKLKDALEKAITKLEANKRTLKASPESSRSIKNKNVVALEMLPRRSNPETIGDGSMLASTSTAVMLQTKKPAVIVEMERRCKIINLLAKQNQILESISGEAIPMHGPSKHLHEDEGLTLQVLSARASTPYTQPSSMLSCTAVSCDLEHDSPRKQVASKEAVPEQQSSQVQQKRPPSTGIHKPGSLRAPKAVRPTTAPVVSSKPVKSYTRSRLMDIRNGMFNALMHRSKESFVMPRIATCDDIELEGRLRRMNIWRTSDGTRFRTRSTTANLNMNNNNNNECMPAFFKNKNKPNLISDESIIQSQPPQPQTEFQDPAIVNQRRIGSGRLNHSKWGYNDEDYHSYHNGKSQHMEEVNSKNSKNMTVLQFFDNGEISSQPQRRPNTPVMGMSINRSENDTLHSNESSEDLSRANENYVKRVMSGFLVVSKPKSRDVEDRHHRRYRNQNEEPEWFSCGPTSRLDTIELCGFDEDEEKMLKEGNKNHGLGETERETSKQKMDHKYKWTHAEPMGRSKYMPKHDTNNNHNVENMNNVMATEHQQQKEEKRPGSGRSFQFDKFNQSQQNYESSSYVNHQQPPQTQPQQMQQQSNTNTNNSKFMSFFANEGNSSSSSLNEFFKQAINQGHGNNPEQPKSLGHIGQMPSVDQLEAKWRRNSLNNVGETANKQTDNFQKLIGSLSSAKPQSQAVGYDAISNFIMQQQQYQQQQQKQHLIIQQQQQHTAFLASLQLKAILGRADTQLLLLRLTKGEISKHGLLVQLANPRLTDMDREAITAVLQFTNTQQQQQQHKQQLDMLSSTVIASQLQNLHNLAIVQQTLAARQQPQHNPQTQAPHQLSQEDLQAHANVIMRNAVMKRKIEEQTSKLINGGAKHQAQQQYLNRGQQRQARPDANSNALLHALISGGGNNHASGYPMNGQPQKHHSNLRFGDNQNFQSFESNQPHFATQYKQQYQQSQQQHPHQQPQQLNSLHQNNAGAVNSFNKAQMQAQSAISMLPNSGDEFH.

The interval 1 to 106 (MQMAEAEQEN…PPPPPPLPTS (106 aa)) is disordered. 2 stretches are compositionally biased toward pro residues: residues 54–64 (YPPPPPPPTPV) and 95–104 (CAPPPPPPLP). 2 positions are modified to phosphoserine: Ser-263 and Ser-270. Residues 270 to 326 (SPRKQVASKEAVPEQQSSQVQQKRPPSTGIHKPGSLRAPKAVRPTTAPVVSSKPVKS) are disordered. Residues 283 to 294 (EQQSSQVQQKRP) are compositionally biased toward polar residues. The YXXXXLphi motif 1 signature appears at 327 to 333 (YTRSRLM). Ser-347 and Ser-350 each carry phosphoserine. The YXXXXLphi motif 2 motif lies at 363–369 (ELEGRLR). Disordered regions lie at residues 493-528 (ISSQ…EDLS), 596-618 (KEGN…KMDH), 654-673 (TEHQ…SFQF), 679-728 (SQQN…SSSS), 984-1004 (GAKH…QARP), and 1016-1051 (ISGG…FQSF). At Thr-503 the chain carries Phosphothreonine. 5 positions are modified to phosphoserine: Ser-509, Ser-513, Ser-520, Ser-523, and Ser-524. Low complexity-rich tracts occupy residues 679–712 (SQQN…NTNN) and 988–1001 (QAQQ…QQRQ).

Belongs to the 4E-T/EIF4E-T family. As to quaternary structure, component of the osk RNP complex, which is composed of at least exu, yps, aret/bruno, cup, and the mRNA of osk. Interacts with the decapping activators me31B and tral. Component of the nanos RNP complex, which is composed of at least smg, cup, tral, me31B, the CCR4-NOT complex members Rga/NOT2 and Caf1, and the mRNA of nanos (nos). Interacts with btz. Recruited to the 3'-UTR of nos and osk mRNAs by smg and btz, respectively. Forms a ribonucleoprotein complex (RNP) containing at least me31B, eIF4E1, cup, tral and pAbp; this interaction is required for the translational silencing of maternal mRNAs during the maternal-to-zygotic transition. No interaction was detected with pAbp in 1-5 hour embryos. Interacts with osk and vas. Interacts with Pop2, twin/CCR4, Rga, Not3 and Not1 which are all core components of the CCR4-NOT deadenylase complex; interaction with the complex is required for cup deadenylation activity. Interacts with nanos. Interacts with smg. Interacts (via YXXXXLphi motifs) with eIF4E1; the interaction promotes retention of cup in the cytoplasm. Interacts with orb; the interaction represses the orb positive autoregulatory loop. Interacts with Nup154. Predominantly expressed in ovaries and in 0-2 hours old embryos. Weakly expressed in testis. Expressed in young embryos through stage 9, then it decreases throughout the rest of embryogenesis. In ovaries, it is expressed in germ cells throughout pre-vitellogenic development, but is not expressed in the somatic follicle cells. In germarial cysts, the protein (and not the transcripts) is transported selectively into the oocyte.

It is found in the cytoplasm. It localises to the nucleus. The protein localises to the cytoplasmic ribonucleoprotein granule. In terms of biological role, adapter protein that plays a central role in localization of transcripts in the oocyte and in young embryos. Maintains RNA targets in a repressed state by promoting their deadenylation and protects deadenylated mRNAs from further degradation. Binds to and recruits eIF-4E to the 3'-UTR of some mRNA targets which prevents interaction between eIF4E1 and eIF4G. This may contribute to translational repression but does not appear to be necessary for it to occur. Can promote translational repression independently of deadenylation and eIF4E1 binding. Required for correct localization of eIF4E1 in the developing oocyte. Required for translational repression of oskar (osk) mRNA. Also required for the translational repression of nanos (nos) mRNA. Promotes the accumulation of the germ plasm components osk, vas and stau at the posterior pole of the oocyte and is required for germ cell development. Represses orb positive autoregulatory activity which prevents premature activation of orb and ensures its accumulation specifically in the developing oocyte. In 0-1 hour embryos, forms a complex with me31B, cup, tral and pAbp which binds to various mRNAs including maternal mRNAs, and down-regulates their expression during the maternal-to-zygotic transition. The sequence is that of Protein cup (cup) from Drosophila melanogaster (Fruit fly).